The chain runs to 416 residues: Histidine--tRNA ligase (416 aa).

It belongs to the class-II aminoacyl-tRNA synthetase family.

The protein localises to the cytoplasm. The catalysed reaction is tRNA(His) + L-histidine + ATP = L-histidyl-tRNA(His) + AMP + diphosphate + H(+). This is Histidine--tRNA ligase from Methanococcus maripaludis (strain DSM 14266 / JCM 13030 / NBRC 101832 / S2 / LL).